A 686-amino-acid chain; its full sequence is Disintegrin and metalloproteinase domain-containing protein 17 homolog (686 aa).

The signal sequence occupies residues 1–21 (MKIQDRSLLIFLVLGILKSDA). Residues 22 to 177 (FNTRVKRHAP…RRAIAIPSDR (156 aa)) constitute a propeptide that is removed on maturation. Asn59, Asn206, and Asn262 each carry an N-linked (GlcNAc...) asparagine glycan. The Extracellular segment spans residues 178–637 (RKDVLNVKRN…TGGVLEFIKT (460 aa)). Positions 187–445 (NRCTLKLVAD…KWESCFQEEM (259 aa)) constitute a Peptidase M12B domain. Disulfide bonds link Cys328/Cys440 and Cys394/Cys424. Residue His370 participates in Zn(2+) binding. The active site involves Glu371. 2 residues coordinate Zn(2+): His374 and His380. A Disintegrin domain is found at 446-535 (TSFCGNGIVE…ECPSAPPVRD (90 aa)). An N-linked (GlcNAc...) asparagine glycan is attached at Asn501. An intrachain disulfide couples Cys506 to Cys527. An N-linked (GlcNAc...) asparagine glycan is attached at Asn581. Residues 638 to 658 (HIVVIAIIFFTLIFVGIYKIV) form a helical membrane-spanning segment. At 659–686 (KYGENFTEKVTHKTAGGCRSVFVKADVN) the chain is on the cytoplasmic side.

Requires Zn(2+) as cofactor.

Its subcellular location is the cell membrane. Functionally, metalloprotease. Acts together with protease sup-17 to facilitate lin-12/Notch signaling during developmental cell fate decision, including anchor cell/ventral uterine precursor cell decision. By modulating glp-1/Notch signaling, plays a role in germline development. In Caenorhabditis elegans, this protein is Disintegrin and metalloproteinase domain-containing protein 17 homolog.